The primary structure comprises 59 residues: MKLHMLNMLNCLLLTVCDGHLHMHGNGATQVFKPRLVLKCPNAAQLIQPGKLQRQLLLP.

An N-terminal signal peptide occupies residues 1–19 (MKLHMLNMLNCLLLTVCDG).

As to expression, salivary glands.

Its subcellular location is the secreted. Anti-inflammatory peptide that may facilitate successful blood feeding of ticks and may lead to immunotolerance in its host. Inhibits the secretion of inflammatory factors in rat splenocytes, such as tumor necrosis factor-alpha (TNF), interleukin-1, interleukin-8 (CXCL8) and interferon-gamma (IFNG). In addition, shows strong free radical scavenging and antioxidant activities in vitro. In vivo, inhibits adjuvant-induced paw inflammation in mouse models. This is Anti-inflammatory peptide amregulin from Amblyomma variegatum (Tropical bont tick).